Here is a 450-residue protein sequence, read N- to C-terminus: Phosphoglucosamine mutase (450 aa).

The active-site Phosphoserine intermediate is Ser-101. The Mg(2+) site is built by Ser-101, Asp-240, Asp-242, and Asp-244. Position 101 is a phosphoserine (Ser-101).

Belongs to the phosphohexose mutase family. Mg(2+) is required as a cofactor. In terms of processing, activated by phosphorylation.

It catalyses the reaction alpha-D-glucosamine 1-phosphate = D-glucosamine 6-phosphate. Its function is as follows. Catalyzes the conversion of glucosamine-6-phosphate to glucosamine-1-phosphate. This is Phosphoglucosamine mutase from Streptococcus pneumoniae (strain JJA).